A 341-amino-acid chain; its full sequence is Putative UPF0607 protein FLJ37424 (341 aa).

Disordered regions lie at residues 72–131 (PKTE…NPRP) and 216–283 (GLLM…LPCL). The span at 79-101 (EEPKEATEVKDQVETQGQEDNKR) shows a compositional bias: basic and acidic residues. Polar residues predominate over residues 108 to 127 (EAASTSRPLETQGNLTSSWY). Residues 243-252 (AGHRSHKRKL) show a composition bias toward basic residues.

It belongs to the UPF0607 family.

In Homo sapiens (Human), this protein is Putative UPF0607 protein FLJ37424.